The primary structure comprises 190 residues: Cytoglobin (190 aa).

The segment at 1–21 (MEKVPGDMEIERRERSEELSE) is disordered. A Globin domain is found at 18 to 167 (ELSEAERKAV…IYSHVTAAYK (150 aa)). C38 and C83 are disulfide-bonded. 2 residues coordinate heme b: H81 and H113.

It belongs to the globin family. In terms of assembly, monomeric. Homodimer; disulfide-linked in vitro. Also homooligomeric in vitro. In terms of processing, the formation of an intramolecular disulfide bond between cysteines Cys-38 and Cys-83 specifically enhances the nitrite reductase activity. As to expression, expressed in brain and retina by non-neuronal cells (at protein level). This is the major globin expressed in vascular smooth muscle and is not present in the endothelium (at protein level).

The protein resides in the cytoplasm. It is found in the nucleus. The enzyme catalyses Fe(II)-heme b-[protein] + nitric oxide + O2 = Fe(III)-heme b-[protein] + nitrate. It catalyses the reaction 2 superoxide + 2 H(+) = H2O2 + O2. It carries out the reaction Fe(III)-heme b-[protein] + nitric oxide + H2O = Fe(II)-heme b-[protein] + nitrite + 2 H(+). The catalysed reaction is H2O2 + AH2 = A + 2 H2O. With respect to regulation, the nitric oxide dioxygenase activity is activated by a reducing system composed of cytochrome b5, its upstream reductase CYB5R3 and NADH. Probable multifunctional globin with a hexacoordinated heme iron required for the catalysis of various reactions depending on redox condition of the cell as well as oxygen availability. Has a nitric oxide dioxygenase (NOD) activity and is most probably involved in cell-mediated and oxygen-dependent nitric oxide consumption. By scavenging this second messenger may regulate several biological processes including endothelium-mediated vasodilation and vascular tone. Under normoxic conditions functions as a nitric oxide dioxygenase (NOD) but under hypoxic conditions the globin may switch its function to that of a nitrite (NO2) reductase (NiR), generating nitric oxide. Could also have peroxidase and superoxide dismutase activities, detoxifying reactive oxygen species and protecting cells against oxidative stress. Also binds dioxygen with low affinity and could function as an oxygen sensor but has probably no function as a respiratory oxygen carrier. The chain is Cytoglobin from Mus musculus (Mouse).